A 282-amino-acid chain; its full sequence is Large ribosomal subunit protein uL2 (282 aa).

The interval 230–282 (AMNPIDHPLGGGEGRSSGGRHPVSPWGMPAKGYKTRDKKKASSRLIVKRRGQK) is disordered. The span at 265-282 (RDKKKASSRLIVKRRGQK) shows a compositional bias: basic residues.

The protein belongs to the universal ribosomal protein uL2 family. In terms of assembly, part of the 50S ribosomal subunit. Forms a bridge to the 30S subunit in the 70S ribosome.

In terms of biological role, one of the primary rRNA binding proteins. Required for association of the 30S and 50S subunits to form the 70S ribosome, for tRNA binding and peptide bond formation. It has been suggested to have peptidyltransferase activity; this is somewhat controversial. Makes several contacts with the 16S rRNA in the 70S ribosome. The sequence is that of Large ribosomal subunit protein uL2 from Desulfovibrio desulfuricans (strain ATCC 27774 / DSM 6949 / MB).